Reading from the N-terminus, the 96-residue chain is Co-chaperonin GroES (96 aa).

This sequence belongs to the GroES chaperonin family. In terms of assembly, heptamer of 7 subunits arranged in a ring. Interacts with the chaperonin GroEL.

It is found in the cytoplasm. Together with the chaperonin GroEL, plays an essential role in assisting protein folding. The GroEL-GroES system forms a nano-cage that allows encapsulation of the non-native substrate proteins and provides a physical environment optimized to promote and accelerate protein folding. GroES binds to the apical surface of the GroEL ring, thereby capping the opening of the GroEL channel. The polypeptide is Co-chaperonin GroES (Aggregatibacter actinomycetemcomitans (Actinobacillus actinomycetemcomitans)).